A 407-amino-acid chain; its full sequence is Multifunctional CCA protein (407 aa).

2 residues coordinate ATP: Gly8 and Arg11. Residues Gly8 and Arg11 each contribute to the CTP site. Mg(2+)-binding residues include Asp21 and Asp23. The ATP site is built by Arg91, Arg137, and Arg140. Positions 91, 137, and 140 each coordinate CTP. Positions 226-327 constitute an HD domain; the sequence is TGIHVMAVVD…VKLLERTDAL (102 aa).

It belongs to the tRNA nucleotidyltransferase/poly(A) polymerase family. Bacterial CCA-adding enzyme type 1 subfamily. Monomer. Can also form homodimers and oligomers. Requires Mg(2+) as cofactor. The cofactor is Ni(2+).

It carries out the reaction a tRNA precursor + 2 CTP + ATP = a tRNA with a 3' CCA end + 3 diphosphate. The catalysed reaction is a tRNA with a 3' CCA end + 2 CTP + ATP = a tRNA with a 3' CCACCA end + 3 diphosphate. In terms of biological role, catalyzes the addition and repair of the essential 3'-terminal CCA sequence in tRNAs without using a nucleic acid template. Adds these three nucleotides in the order of C, C, and A to the tRNA nucleotide-73, using CTP and ATP as substrates and producing inorganic pyrophosphate. tRNA 3'-terminal CCA addition is required both for tRNA processing and repair. Also involved in tRNA surveillance by mediating tandem CCA addition to generate a CCACCA at the 3' terminus of unstable tRNAs. While stable tRNAs receive only 3'-terminal CCA, unstable tRNAs are marked with CCACCA and rapidly degraded. The protein is Multifunctional CCA protein of Aromatoleum aromaticum (strain DSM 19018 / LMG 30748 / EbN1) (Azoarcus sp. (strain EbN1)).